A 65-amino-acid polypeptide reads, in one-letter code: Gallinacin-1 (65 aa).

A signal peptide spans 1–19; the sequence is MRIVYLLLPFILLLAQGAA. The propeptide occupies 20–25; it reads GSSQAL. 3 disulfide bridges follow: cysteine 31–cysteine 59, cysteine 38–cysteine 53, and cysteine 43–cysteine 60.

This sequence belongs to the beta-defensin family. As to expression, strong expression in the bone marrow, lung, testis. Moderate expression in the bursa and intestine. Low expression in the cloaca, gall bladder, brain and pancreas. Expressed in the vagina, ovarian stroma and the theca and granulosa layers of the ovarian follicle.

The protein localises to the secreted. It localises to the cytoplasmic granule. In terms of biological role, has bactericidal activity. Potent activity against E.coli ML-35, L.monocytogenes EGD and C.albicans. The protein is Gallinacin-1 (GAL1) of Gallus gallus (Chicken).